Reading from the N-terminus, the 195-residue chain is Probable GTP-binding protein EngB (195 aa).

In terms of domain architecture, EngB-type G spans 24–195 (GLTEVALSGR…EIWNFIETYI (172 aa)). GTP contacts are provided by residues 32–39 (GRSNVGKS), 59–63 (GKTQT), 77–80 (DVPG), 144–147 (TKED), and 176–178 (YSS). The Mg(2+) site is built by Ser-39 and Thr-61.

The protein belongs to the TRAFAC class TrmE-Era-EngA-EngB-Septin-like GTPase superfamily. EngB GTPase family. Mg(2+) serves as cofactor.

Functionally, necessary for normal cell division and for the maintenance of normal septation. The chain is Probable GTP-binding protein EngB from Staphylococcus epidermidis (strain ATCC 35984 / DSM 28319 / BCRC 17069 / CCUG 31568 / BM 3577 / RP62A).